The sequence spans 338 residues: Lipoate-protein ligase A (338 aa).

The 188-residue stretch at 29–216 (PTTQRVLFLW…AFFDYFGEQC (188 aa)) folds into the BPL/LPL catalytic domain. ATP is bound by residues R71, 76–79 (GAVF), and K134. Residue K134 coordinates (R)-lipoate.

It belongs to the LplA family. In terms of assembly, monomer.

The protein localises to the cytoplasm. The catalysed reaction is L-lysyl-[lipoyl-carrier protein] + (R)-lipoate + ATP = N(6)-[(R)-lipoyl]-L-lysyl-[lipoyl-carrier protein] + AMP + diphosphate + H(+). Its pathway is protein modification; protein lipoylation via exogenous pathway; protein N(6)-(lipoyl)lysine from lipoate: step 1/2. It participates in protein modification; protein lipoylation via exogenous pathway; protein N(6)-(lipoyl)lysine from lipoate: step 2/2. Catalyzes both the ATP-dependent activation of exogenously supplied lipoate to lipoyl-AMP and the transfer of the activated lipoyl onto the lipoyl domains of lipoate-dependent enzymes. The sequence is that of Lipoate-protein ligase A from Pectobacterium carotovorum subsp. carotovorum (strain PC1).